The sequence spans 267 residues: Translation initiation factor 2 subunit alpha (267 aa).

Positions Gly-10 to Lys-81 constitute an S1 motif domain.

Belongs to the eIF-2-alpha family. As to quaternary structure, heterotrimer composed of an alpha, a beta and a gamma chain.

Functionally, eIF-2 functions in the early steps of protein synthesis by forming a ternary complex with GTP and initiator tRNA. The polypeptide is Translation initiation factor 2 subunit alpha (Halobacterium salinarum (strain ATCC 29341 / DSM 671 / R1)).